A 344-amino-acid chain; its full sequence is Arginine N-succinyltransferase (344 aa).

Succinyl-CoA is bound at residue L125. The active-site Proton donor is the H229.

It belongs to the arginine N-succinyltransferase family.

The catalysed reaction is succinyl-CoA + L-arginine = N(2)-succinyl-L-arginine + CoA + H(+). The protein operates within amino-acid degradation; L-arginine degradation via AST pathway; L-glutamate and succinate from L-arginine: step 1/5. In terms of biological role, catalyzes the transfer of succinyl-CoA to arginine to produce N(2)-succinylarginine. This is Arginine N-succinyltransferase from Escherichia fergusonii (strain ATCC 35469 / DSM 13698 / CCUG 18766 / IAM 14443 / JCM 21226 / LMG 7866 / NBRC 102419 / NCTC 12128 / CDC 0568-73).